Reading from the N-terminus, the 150-residue chain is MSLHFNSIGFLLVVLALLGVLGNNSSITISATVLLLMQQTFLSKYIPVMEKYGLNIGVIILTIGVLSPIVAGKVKIPALTELLHWKMFLSLVVGMLVAWLAGRGVSLMGSQPVLLTGLLIGTILGVGLLGGIPVGPLIAAGILSLLLGKV.

4 consecutive transmembrane segments (helical) span residues Met1–Leu21, Tyr52–Gly72, Leu82–Gly102, and Ile123–Leu143.

It belongs to the UPF0756 family.

The protein resides in the cell membrane. This is UPF0756 membrane protein Asuc_1151 from Actinobacillus succinogenes (strain ATCC 55618 / DSM 22257 / CCUG 43843 / 130Z).